The following is a 463-amino-acid chain: uncharacterized protein (463 aa).

Positions 12 to 70 constitute a TRAM domain; that stretch reads LWQQGSVVELTITGLNHQGEGIGRFNERVVFVPDTAPGDRLEVRLVKVKRNYALAQLLK. Residues Cys-83, Cys-89, Cys-92, and Cys-171 each coordinate [4Fe-4S] cluster. S-adenosyl-L-methionine contacts are provided by Gln-295, Tyr-324, Glu-345, and Asp-390. Cys-417 acts as the Nucleophile in catalysis.

Belongs to the class I-like SAM-binding methyltransferase superfamily. RNA M5U methyltransferase family.

This is an uncharacterized protein from Synechocystis sp. (strain ATCC 27184 / PCC 6803 / Kazusa).